The following is a 435-amino-acid chain: Hydrogenobyrinate a,c-diamide synthase (435 aa).

A GATase cobBQ-type domain is found at 239–422; the sequence is RIGVARDASF…IHFYLPSNPQ (184 aa). The active-site Nucleophile is Cys-321.

The protein belongs to the CobB/CbiA family. Requires Mg(2+) as cofactor.

It catalyses the reaction hydrogenobyrinate + 2 L-glutamine + 2 ATP + 2 H2O = hydrogenobyrinate a,c-diamide + 2 L-glutamate + 2 ADP + 2 phosphate + 2 H(+). It participates in cofactor biosynthesis; adenosylcobalamin biosynthesis; cob(II)yrinate a,c-diamide from precorrin-2 (aerobic route): step 9/10. Functionally, catalyzes the ATP-dependent amidation of the two carboxylate groups at positions a and c of hydrogenobyrinate, using either L-glutamine or ammonia as the nitrogen source. This is Hydrogenobyrinate a,c-diamide synthase from Pseudomonas aeruginosa (strain ATCC 15692 / DSM 22644 / CIP 104116 / JCM 14847 / LMG 12228 / 1C / PRS 101 / PAO1).